Consider the following 166-residue polypeptide: Regulatory protein RecX (166 aa).

The protein belongs to the RecX family.

It localises to the cytoplasm. In terms of biological role, modulates RecA activity. The chain is Regulatory protein RecX from Salmonella newport (strain SL254).